Here is a 149-residue protein sequence, read N- to C-terminus: Heat shock protein beta-3 (149 aa).

One can recognise a sHSP domain in the interval 47–149 (KARAAQAPPV…VEVKDSAGTK (103 aa)).

The protein belongs to the small heat shock protein (HSP20) family.

The protein localises to the cytoplasm. It is found in the nucleus. Functionally, inhibitor of actin polymerization. The protein is Heat shock protein beta-3 (HSPB3) of Bos taurus (Bovine).